Reading from the N-terminus, the 338-residue chain is Acetylcholinesterase (338 aa).

Asparagine 8 carries N-linked (GlcNAc...) asparagine glycosylation. Serine 99 (acyl-ester intermediate) is an active-site residue. A disulfide bond links cysteine 153 and cysteine 164. The active-site Charge relay system is glutamate 226.

This sequence belongs to the type-B carboxylesterase/lipase family.

The protein resides in the synapse. The protein localises to the secreted. It localises to the cell membrane. It carries out the reaction acetylcholine + H2O = choline + acetate + H(+). In terms of biological role, terminates signal transduction at the neuromuscular junction by rapid hydrolysis of the acetylcholine released into the synaptic cleft. The chain is Acetylcholinesterase (ache) from Myxine glutinosa (Atlantic hagfish).